The following is a 361-amino-acid chain: Phenylalanine--tRNA ligase alpha subunit (361 aa).

Glutamate 260 contacts Mg(2+).

Belongs to the class-II aminoacyl-tRNA synthetase family. Phe-tRNA synthetase alpha subunit type 1 subfamily. In terms of assembly, tetramer of two alpha and two beta subunits. The cofactor is Mg(2+).

It localises to the cytoplasm. The enzyme catalyses tRNA(Phe) + L-phenylalanine + ATP = L-phenylalanyl-tRNA(Phe) + AMP + diphosphate + H(+). The sequence is that of Phenylalanine--tRNA ligase alpha subunit from Bartonella quintana (strain Toulouse) (Rochalimaea quintana).